The sequence spans 363 residues: Peptide chain release factor 2 (363 aa).

Q251 is modified (N5-methylglutamine).

It belongs to the prokaryotic/mitochondrial release factor family. In terms of processing, methylated by PrmC. Methylation increases the termination efficiency of RF2.

The protein localises to the cytoplasm. Its function is as follows. Peptide chain release factor 2 directs the termination of translation in response to the peptide chain termination codons UGA and UAA. The protein is Peptide chain release factor 2 (prfB) of Helicobacter pylori (strain J99 / ATCC 700824) (Campylobacter pylori J99).